Reading from the N-terminus, the 185-residue chain is MISVNDFRTGLTIEVDGEIWRVLEFQHVKPGKGAAFVRSKLRNLRTGAIQERTFRAGEKVNRAQIDTRKMQYLYANGDLHVFMDMETYEQIELPAKQIEYELKFLKENMEVFIMMYQGETIGVELPNTVELKVVETEPGIKGDTASGGSKPAKLETGLVVQVPFFVNEGDTLIINTADGTYVSRA.

This sequence belongs to the elongation factor P family.

The protein localises to the cytoplasm. It participates in protein biosynthesis; polypeptide chain elongation. In terms of biological role, involved in peptide bond synthesis. Stimulates efficient translation and peptide-bond synthesis on native or reconstituted 70S ribosomes in vitro. Probably functions indirectly by altering the affinity of the ribosome for aminoacyl-tRNA, thus increasing their reactivity as acceptors for peptidyl transferase. The sequence is that of Elongation factor P from Geobacillus thermodenitrificans (strain NG80-2).